The sequence spans 659 residues: Biosynthetic arginine decarboxylase (659 aa).

Position 128 is an N6-(pyridoxal phosphate)lysine (Lys128). 308–318 (FDVGGGLGVDY) contributes to the substrate binding site.

Belongs to the Orn/Lys/Arg decarboxylase class-II family. SpeA subfamily. Mg(2+) is required as a cofactor. The cofactor is pyridoxal 5'-phosphate.

It catalyses the reaction L-arginine + H(+) = agmatine + CO2. It participates in amine and polyamine biosynthesis; agmatine biosynthesis; agmatine from L-arginine: step 1/1. Functionally, catalyzes the biosynthesis of agmatine from arginine. In Yersinia pestis, this protein is Biosynthetic arginine decarboxylase.